A 481-amino-acid chain; its full sequence is uncharacterized protein (481 aa).

Positions 1–18 (MSRLPSKTKYHSSHRSLN) are enriched in basic residues. A disordered region spans residues 1-37 (MSRLPSKTKYHSSHRSLNRKTPLLQRSSETNSLRESG). The span at 24–34 (LQRSSETNSLR) shows a compositional bias: polar residues. The next 2 helical transmembrane spans lie at 172–191 (SIST…AGAI) and 195–214 (AAAG…YLCW).

It localises to the membrane. This is an uncharacterized protein from Coxiella burnetii (strain RSA 493 / Nine Mile phase I).